A 551-amino-acid chain; its full sequence is DNA mismatch repair protein MutL (551 aa).

It belongs to the DNA mismatch repair MutL/HexB family.

Its function is as follows. This protein is involved in the repair of mismatches in DNA. It is required for dam-dependent methyl-directed DNA mismatch repair. May act as a 'molecular matchmaker', a protein that promotes the formation of a stable complex between two or more DNA-binding proteins in an ATP-dependent manner without itself being part of a final effector complex. The polypeptide is DNA mismatch repair protein MutL (Thermosipho melanesiensis (strain DSM 12029 / CIP 104789 / BI429)).